Reading from the N-terminus, the 264-residue chain is Nicotinamide N-methyltransferase (264 aa).

R18 is subject to Citrulline; alternate. The S-adenosyl-L-methionine site is built by Y20, Y25, G63, Y69, D85, T87, and N90. R132 carries the citrulline; alternate modification. Residues 142–143 and T163 contribute to the S-adenosyl-L-methionine site; that span reads DV. R181 carries the citrulline; alternate modification. 2 residues coordinate nicotinamide: D197 and S213.

This sequence belongs to the class I-like SAM-binding methyltransferase superfamily. NNMT/PNMT/TEMT family. In terms of assembly, monomer. Deiminated by PADI1 and PADI2. In terms of tissue distribution, expressed in white adipose tissue and liver (at protein level).

It is found in the cytoplasm. It catalyses the reaction nicotinamide + S-adenosyl-L-methionine = 1-methylnicotinamide + S-adenosyl-L-homocysteine. The protein operates within cofactor metabolism. It functions in the pathway amino-acid degradation. With respect to regulation, inhibited by 6-methoxynicotinamide (JBSNF-000088). Its function is as follows. Catalyzes the N-methylation of nicotinamide using the universal methyl donor S-adenosyl-L-methionine to form N1-methylnicotinamide and S-adenosyl-L-homocysteine, a predominant nicotinamide/vitamin B3 clearance pathway. Plays a central role in regulating cellular methylation potential, by consuming S-adenosyl-L-methionine and limiting its availability for other methyltransferases. Actively mediates genome-wide epigenetic and transcriptional changes through hypomethylation of repressive chromatin marks, such as H3K27me3. In a developmental context, contributes to low levels of the repressive histone marks that characterize pluripotent embryonic stem cell pre-implantation state. Acts as a metabolic regulator primarily on white adipose tissue energy expenditure as well as hepatic gluconeogenesis and cholesterol biosynthesis. In white adipocytes, regulates polyamine flux by consuming S-adenosyl-L-methionine which provides for propylamine group in polyamine biosynthesis, whereas by consuming nicotinamide controls NAD(+) levels through the salvage pathway. Via its product N1-methylnicotinamide regulates protein acetylation in hepatocytes, by repressing the ubiquitination and increasing the stability of SIRT1 deacetylase. Can also N-methylate other pyridines structurally related to nicotinamide and play a role in xenobiotic detoxification. This is Nicotinamide N-methyltransferase (Nnmt) from Mus musculus (Mouse).